Consider the following 562-residue polypeptide: Bacillolysin (562 aa).

The first 24 residues, 1–24 (MKKKKQALKVLLSVGILSSSFAFA), serve as a signal peptide directing secretion. Residues 25–245 (HTSSAAPNNV…KQAAKPAAKP (221 aa)) constitute a propeptide, activation peptide. Asp-303, Asp-305, and Asp-384 together coordinate Ca(2+). Residue His-388 participates in Zn(2+) binding. The active site involves Glu-389. Zn(2+) contacts are provided by His-392 and Glu-412. Ca(2+) is bound by residues Glu-423, Asn-429, Asp-431, Glu-433, Glu-436, Tyr-439, Thr-440, and Asp-446. His-477 acts as the Proton donor in catalysis.

Belongs to the peptidase M4 family. The cofactor is Ca(2+). It depends on Zn(2+) as a cofactor.

The protein localises to the secreted. The enzyme catalyses Similar, but not identical, to that of thermolysin.. Functionally, extracellular zinc metalloprotease. The chain is Bacillolysin from Priestia megaterium (strain ATCC 14581 / DSM 32 / CCUG 1817 / JCM 2506 / NBRC 15308 / NCIMB 9376 / NCTC 10342 / NRRL B-14308 / VKM B-512 / Ford 19) (Bacillus megaterium).